The chain runs to 464 residues: Protein FAM90A7 (464 aa).

Disordered stretches follow at residues 1–42 (MMAR…DPRL), 69–387 (VPAT…AGHD), and 410–437 (AAPS…SEAP). Basic and acidic residues-rich tracts occupy residues 74–89 (GKKE…KPRA) and 97–111 (NKDK…RQQD). Low complexity predominate over residues 180–197 (LASLSPLRKASLSSSSSL).

The protein belongs to the FAM90 family.

The protein is Protein FAM90A7 of Homo sapiens (Human).